The chain runs to 204 residues: Pyridoxamine 5'-phosphate oxidase YLR456W homolog (204 aa).

FMN-binding positions include 65 to 66 (FT) and Asn-127.

Belongs to the pyridoxamine 5'-phosphate oxidase family. It depends on FMN as a cofactor.

It is found in the cytoplasm. Its subcellular location is the nucleus. This chain is Pyridoxamine 5'-phosphate oxidase YLR456W homolog, found in Saccharomyces cerevisiae (strain ATCC 204508 / S288c) (Baker's yeast).